A 174-amino-acid chain; its full sequence is Repair DNA polymerase X (174 aa).

The interval Arg-42–Asp-51 is involved in ssDNA binding. Mg(2+)-binding residues include Asp-49 and Asp-51. A disulfide bridge connects residues Cys-81 and Cys-86. Asp-100 serves as a coordination point for Mg(2+).

Belongs to the DNA polymerase type-X family. Mg(2+) is required as a cofactor.

Its subcellular location is the virion. The catalysed reaction is DNA(n) + a 2'-deoxyribonucleoside 5'-triphosphate = DNA(n+1) + diphosphate. In terms of biological role, error-prone polymerase lacking a proofreading 3'-5' exonuclease which catalyzes the gap-filling reaction during the DNA repair process. Specifically binds intermediates in the single-nucleotide base-excision repair process. Also catalyzes DNA polymerization with low nucleotide-insertion fidelity. Probably acts as a strategic DNA mutase, which gives rise to a rapid emergence of variants. Generates mismatched G-G pairs, in that case, the polymerase first binds the deoxynucleotide followed by mismatch formation. Together with the viral DNA ligase, fills the single nucleotide gaps generated by the AP endonuclease. Binds DNA with high affinity via the helix alphaE. The protein is Repair DNA polymerase X of Ornithodoros (relapsing fever ticks).